The sequence spans 336 residues: Heme A synthase (336 aa).

8 helical membrane passes run 5-25 (LTRWLLTCCIMVVAMIIVGGI), 92-112 (GRATGLIYILPLIYFYFKGII), 117-137 (ILSYIIVLLLFCVQGFMGWYM), 153-173 (LAFHLIIAVIIYHLLFYKLVK), 191-211 (LIFSVAAIAMIYVQIFLGALV), 253-273 (FIHRLGAYSLSIIVIALIISL), 284-304 (VAFYLSIALLIQLSTGVITLL), and 307-327 (VPIIAASMHQFFAIVLLSVVI). Residue H255 coordinates heme. A heme-binding site is contributed by H315.

Belongs to the COX15/CtaA family. Type 2 subfamily. In terms of assembly, interacts with CtaB. It depends on heme b as a cofactor.

The protein resides in the cell membrane. The enzyme catalyses Fe(II)-heme o + 2 A + H2O = Fe(II)-heme a + 2 AH2. It participates in porphyrin-containing compound metabolism; heme A biosynthesis; heme A from heme O: step 1/1. Its function is as follows. Catalyzes the conversion of heme O to heme A by two successive hydroxylations of the methyl group at C8. The first hydroxylation forms heme I, the second hydroxylation results in an unstable dihydroxymethyl group, which spontaneously dehydrates, resulting in the formyl group of heme A. In Rickettsia bellii (strain RML369-C), this protein is Heme A synthase.